Consider the following 492-residue polypeptide: Peptidyl-prolyl cis-trans isomerase-like 4 (492 aa).

Residues 1 to 161 (MAVLLETTLG…QDIRINHTVI (161 aa)) form the PPIase cyclophilin-type domain. Positions 167 to 188 (DDPPDLLIPDRSPEPTREQLDS) are disordered. The span at 177-187 (RSPEPTREQLD) shows a compositional bias: basic and acidic residues. Serine 178 carries the post-translational modification Phosphoserine. Threonine 182 is modified (phosphothreonine). Residues lysine 201, lysine 212, and lysine 218 each participate in a glycyl lysine isopeptide (Lys-Gly) (interchain with G-Cter in SUMO2) cross-link. The RRM domain maps to 240–318 (NVLFVCKLNP…RRIHVDFSQS (79 aa)). Residues lysine 321 and lysine 362 each participate in a glycyl lysine isopeptide (Lys-Gly) (interchain with G-Cter in SUMO2) cross-link. Disordered regions lie at residues 368-406 (DEQA…PIKN) and 423-492 (EESC…SKYR). Residues 377 to 390 (SHSHTSKKHKKKTH) are compositionally biased toward basic residues. Serine 393 is modified (phosphoserine). Lysine 405 is covalently cross-linked (Glycyl lysine isopeptide (Lys-Gly) (interchain with G-Cter in SUMO2)). Positions 426-452 (CWEKQKSEKRDRTQNRSRSRSRERDGH) are enriched in basic and acidic residues. Lysine 460 participates in a covalent cross-link: Glycyl lysine isopeptide (Lys-Gly) (interchain with G-Cter in SUMO2). Serine 471 bears the Phosphoserine mark. The segment covering 482–492 (KSKDKEKSKYR) has biased composition (basic and acidic residues).

It belongs to the cyclophilin-type PPIase family. PPIL4 subfamily. In terms of tissue distribution, abundantly expressed in kidney but has a ubiquitously low expression pattern in other adult tissues.

It is found in the nucleus. The catalysed reaction is [protein]-peptidylproline (omega=180) = [protein]-peptidylproline (omega=0). In terms of biological role, PPIases accelerate the folding of proteins. It catalyzes the cis-trans isomerization of proline imidic peptide bonds in oligopeptides. This chain is Peptidyl-prolyl cis-trans isomerase-like 4 (PPIL4), found in Homo sapiens (Human).